A 291-amino-acid polypeptide reads, in one-letter code: Nucleotide-binding protein CMM_1747 (291 aa).

Gly15 to Ser22 serves as a coordination point for ATP. Residue Asp66–Gly69 participates in GTP binding.

This sequence belongs to the RapZ-like family.

Functionally, displays ATPase and GTPase activities. This Clavibacter michiganensis subsp. michiganensis (strain NCPPB 382) protein is Nucleotide-binding protein CMM_1747.